Consider the following 300-residue polypeptide: Nucleotide-binding protein MCCL_0516 (300 aa).

An ATP-binding site is contributed by 15-22 (GMSGAGKS). 66–69 (DLRG) is a binding site for GTP.

It belongs to the RapZ-like family.

In terms of biological role, displays ATPase and GTPase activities. This is Nucleotide-binding protein MCCL_0516 from Macrococcus caseolyticus (strain JCSC5402) (Macrococcoides caseolyticum).